A 347-amino-acid polypeptide reads, in one-letter code: Phenylalanine--tRNA ligase alpha subunit (347 aa).

Residue glutamate 265 participates in Mg(2+) binding.

It belongs to the class-II aminoacyl-tRNA synthetase family. Phe-tRNA synthetase alpha subunit type 1 subfamily. Tetramer of two alpha and two beta subunits. Requires Mg(2+) as cofactor.

It is found in the cytoplasm. It carries out the reaction tRNA(Phe) + L-phenylalanine + ATP = L-phenylalanyl-tRNA(Phe) + AMP + diphosphate + H(+). The sequence is that of Phenylalanine--tRNA ligase alpha subunit from Wolbachia sp. subsp. Brugia malayi (strain TRS).